The primary structure comprises 418 residues: 3-isopropylmalate dehydratase large subunit (418 aa).

[4Fe-4S] cluster-binding residues include Cys299, Cys359, and Cys362.

It belongs to the aconitase/IPM isomerase family. LeuC type 2 subfamily. As to quaternary structure, heterodimer of LeuC and LeuD. Requires [4Fe-4S] cluster as cofactor.

It carries out the reaction (2R,3S)-3-isopropylmalate = (2S)-2-isopropylmalate. It functions in the pathway amino-acid biosynthesis; L-leucine biosynthesis; L-leucine from 3-methyl-2-oxobutanoate: step 2/4. In terms of biological role, catalyzes the isomerization between 2-isopropylmalate and 3-isopropylmalate, via the formation of 2-isopropylmaleate. This is 3-isopropylmalate dehydratase large subunit from Nitratidesulfovibrio vulgaris (strain DSM 19637 / Miyazaki F) (Desulfovibrio vulgaris).